The primary structure comprises 93 residues: MANNKSAKKRILITKRNNLQNRFYKSSVRTLTKRFLSDLETYKISQSNTDKDKLQNGLSSIYSLIDKGYKKNVYHKNTAARKKSKLAALLKAA.

It belongs to the bacterial ribosomal protein bS20 family.

The protein resides in the plastid. It localises to the chloroplast. Functionally, binds directly to 16S ribosomal RNA. This chain is Small ribosomal subunit protein bS20c, found in Thalassiosira pseudonana (Marine diatom).